Consider the following 272-residue polypeptide: Regulatory protein RecX (272 aa).

Belongs to the RecX family.

The protein resides in the cytoplasm. Functionally, modulates RecA activity. This is Regulatory protein RecX from Oceanobacillus iheyensis (strain DSM 14371 / CIP 107618 / JCM 11309 / KCTC 3954 / HTE831).